Here is a 362-residue protein sequence, read N- to C-terminus: Chorismate synthase (362 aa).

Arg-47 is a binding site for NADP(+). FMN-binding positions include 124–126 (RSS), Gly-286, 301–305 (KPTAT), and Arg-327.

This sequence belongs to the chorismate synthase family. Homotetramer. The cofactor is FMNH2.

It carries out the reaction 5-O-(1-carboxyvinyl)-3-phosphoshikimate = chorismate + phosphate. Its pathway is metabolic intermediate biosynthesis; chorismate biosynthesis; chorismate from D-erythrose 4-phosphate and phosphoenolpyruvate: step 7/7. Its function is as follows. Catalyzes the anti-1,4-elimination of the C-3 phosphate and the C-6 proR hydrogen from 5-enolpyruvylshikimate-3-phosphate (EPSP) to yield chorismate, which is the branch point compound that serves as the starting substrate for the three terminal pathways of aromatic amino acid biosynthesis. This reaction introduces a second double bond into the aromatic ring system. The chain is Chorismate synthase from Nostoc punctiforme (strain ATCC 29133 / PCC 73102).